A 205-amino-acid chain; its full sequence is Adenylyl-sulfate kinase (205 aa).

An ATP-binding site is contributed by 31–38 (GLSGAGKS). S105 functions as the Phosphoserine intermediate in the catalytic mechanism.

This sequence belongs to the APS kinase family.

The enzyme catalyses adenosine 5'-phosphosulfate + ATP = 3'-phosphoadenylyl sulfate + ADP + H(+). The protein operates within sulfur metabolism; hydrogen sulfide biosynthesis; sulfite from sulfate: step 2/3. Functionally, catalyzes the synthesis of activated sulfate. The polypeptide is Adenylyl-sulfate kinase (Shewanella baltica (strain OS155 / ATCC BAA-1091)).